We begin with the raw amino-acid sequence, 260 residues long: ATP synthase subunit a (260 aa).

Helical transmembrane passes span 29 to 49 (FSFT…LLLI), 95 to 115 (FFPC…QGMI), 124 to 144 (HFLI…IVGF), 151 to 171 (FFSF…LVLL), 191 to 211 (MMAG…MLCM), 213 to 233 (EIFY…LTGL), and 237 to 257 (VAIL…NDAI).

This sequence belongs to the ATPase A chain family. In terms of assembly, F-type ATPases have 2 components, CF(1) - the catalytic core - and CF(0) - the membrane proton channel. CF(1) has five subunits: alpha(3), beta(3), gamma(1), delta(1), epsilon(1). CF(0) has three main subunits: a, b and c.

It is found in the mitochondrion inner membrane. In terms of biological role, mitochondrial membrane ATP synthase (F(1)F(0) ATP synthase or Complex V) produces ATP from ADP in the presence of a proton gradient across the membrane which is generated by electron transport complexes of the respiratory chain. F-type ATPases consist of two structural domains, F(1) - containing the extramembraneous catalytic core and F(0) - containing the membrane proton channel, linked together by a central stalk and a peripheral stalk. During catalysis, ATP synthesis in the catalytic domain of F(1) is coupled via a rotary mechanism of the central stalk subunits to proton translocation. Key component of the proton channel; it may play a direct role in the translocation of protons across the membrane. This is ATP synthase subunit a (ATP6) from Brassica napus (Rape).